We begin with the raw amino-acid sequence, 121 residues long: Large ribosomal subunit protein uL14 (121 aa).

Belongs to the universal ribosomal protein uL14 family. In terms of assembly, part of the 50S ribosomal subunit. Forms a cluster with proteins L3 and L19. In the 70S ribosome, L14 and L19 interact and together make contacts with the 16S rRNA in bridges B5 and B8.

Functionally, binds to 23S rRNA. Forms part of two intersubunit bridges in the 70S ribosome. The chain is Large ribosomal subunit protein uL14 from Synechococcus elongatus (strain ATCC 33912 / PCC 7942 / FACHB-805) (Anacystis nidulans R2).